Reading from the N-terminus, the 74-residue chain is Cell division protein ZapB (74 aa).

The stretch at 2–74 (TLDLLEQLES…LVGKIEETES (73 aa)) forms a coiled coil.

Belongs to the ZapB family. Homodimer. The ends of the coiled-coil dimer bind to each other, forming polymers. Interacts with FtsZ.

The protein localises to the cytoplasm. Functionally, non-essential, abundant cell division factor that is required for proper Z-ring formation. It is recruited early to the divisome by direct interaction with FtsZ, stimulating Z-ring assembly and thereby promoting cell division earlier in the cell cycle. Its recruitment to the Z-ring requires functional FtsA or ZipA. The protein is Cell division protein ZapB of Psychromonas ingrahamii (strain DSM 17664 / CCUG 51855 / 37).